We begin with the raw amino-acid sequence, 515 residues long: Proline--tRNA ligase (515 aa).

The protein belongs to the class-II aminoacyl-tRNA synthetase family. ProS type 3 subfamily. As to quaternary structure, homodimer.

Its subcellular location is the cytoplasm. It catalyses the reaction tRNA(Pro) + L-proline + ATP = L-prolyl-tRNA(Pro) + AMP + diphosphate. Functionally, catalyzes the attachment of proline to tRNA(Pro) in a two-step reaction: proline is first activated by ATP to form Pro-AMP and then transferred to the acceptor end of tRNA(Pro). This is Proline--tRNA ligase from Novosphingobium aromaticivorans (strain ATCC 700278 / DSM 12444 / CCUG 56034 / CIP 105152 / NBRC 16084 / F199).